A 1308-amino-acid polypeptide reads, in one-letter code: Receptor tyrosine-protein kinase erbB-4 (1308 aa).

Positions 1-25 are cleaved as a signal peptide; sequence MKLATGLWVWGSLLMAAGTVQPSAS. Residues 26–652 are Extracellular-facing; the sequence is QSVCAGTENK…TLPQHARTPL (627 aa). An intrachain disulfide couples C29 to C56. Residues N138, N174, and N181 are each glycosylated (N-linked (GlcNAc...) asparagine). Disulfide bonds link C156-C186, C189-C197, C193-C205, C213-C221, C217-C229, C230-C238, C234-C246, C249-C258, C262-C289, C293-C304, C308-C323, and C326-C330. Residue N253 is glycosylated (N-linked (GlcNAc...) asparagine). Residues N410, N473, and N495 are each glycosylated (N-linked (GlcNAc...) asparagine). Disulfide bonds link C503-C512, C507-C520, C523-C532, C536-C552, C555-C569, C559-C577, C580-C589, C593-C614, C617-C625, and C621-C633. The N-linked (GlcNAc...) asparagine glycan is linked to N548. The N-linked (GlcNAc...) asparagine glycan is linked to N576. A glycan (N-linked (GlcNAc...) asparagine) is linked at N620. A transmembrane helix spans residues 653–673; it reads IAAGVIGGLFILVIMALTFAV. Over 674–1308 the chain is Cytoplasmic; the sequence is YVRRKSIKKK…PPYRHRNTVV (635 aa). Positions 676–684 match the Nuclear localization signal motif; sequence RRKSIKKKR. Residues 718-985 enclose the Protein kinase domain; it reads LKRVKVLGSG…RMARDPQRYL (268 aa). ATP contacts are provided by residues 724–732, K751, 797–799, and 843–848; these read LGSGAFGTV, QLM, and DLAARN. D843 (proton acceptor) is an active-site residue. Residues Y875, Y1035, and Y1056 each carry the phosphotyrosine; by autocatalysis modification. The PPxy motif 1 motif lies at 1032–1035; the sequence is PPIY. The segment at 1117–1149 is disordered; the sequence is PHVQEDSSTQRYSADPTVFAPERNPRGELDEEG. Phosphotyrosine; by autocatalysis occurs at positions 1150, 1162, 1188, 1202, 1242, 1258, and 1284. The PPxY motif 2 signature appears at 1282–1285; that stretch reads PEYL. Residues 1290–1292 carry the PDZ-binding motif; the sequence is LKP.

Belongs to the protein kinase superfamily. Tyr protein kinase family. EGF receptor subfamily. As to quaternary structure, monomer in the absence of bound ligand. Homodimer or heterodimer with another ERBB family member upon ligand binding, thus forming heterotetramers. Interacts with EGFR and ERBB2. Interacts with DLG2 (via its PDZ domain), DLG3 (via its PDZ domain), DLG4 (via its PDZ domain) and SNTB2 (via its PDZ domain). Interacts with MUC1. Interacts (via its PPxy motifs) with WWOX. Interacts (via the PPxY motif 3 of isoform JM-A CYT-2) with YAP1 (via the WW domain 1 of isoform 1). Interacts (isoform JM-A CYT-1 and isoform JM-B CYT-1) with WWP1. Interacts (via its intracellular domain) with TRIM28. Interacts (via the intracellular domains of both CYT-1 and CYT-2 isoforms) with KAP1; the interaction does not phosphorylate KAP1 but represses ERBB4-mediated transcriptional activity. Interacts with PRPU, DDX23, MATR3, RBM15, ILF3, KAP1, U5S1, U2SURP, ITCH, HNRNPU, AP2A1, NULC, LEO1, WWP2, IGHG1, HXK1, GRB7 and SRRT. Interacts (phosphorylated isoform JM-A CYT-1 and isoform JM-B CYT-1) with PIK3R1. Interacts with SHC1. Interacts with GRB2. Interacts (soluble intracellular domain) with BCL2. Interacts (phosphorylated) with STAT1. Interacts with CBFA2T3. Interacts (soluble intracellular domain) with STAT5A. Isoform JM-A CYT-1 and isoform JM-A CYT-2 are processed by ADAM17. Proteolytic processing in response to ligand or 12-O-tetradecanoylphorbol-13-acetate stimulation results in the production of 120 kDa soluble receptor forms and intermediate membrane-anchored 80 kDa fragments (m80HER4), which are further processed by a presenilin-dependent gamma-secretase to release a cytoplasmic intracellular domain (E4ICD; E4ICD1/s80Cyt1 or E4ICD2/s80Cyt2, depending on the isoform). Membrane-anchored 80 kDa fragments of the processed isoform JM-A CYT-1 are more readily degraded by the proteasome than fragments of isoform JM-A CYT-2, suggesting a prevalence of E4ICD2 over E4ICD1. Isoform JM-B CYT-1 and isoform JM-B CYT-2 lack the ADAM17 cleavage site and are not processed by ADAM17, precluding further processing by gamma-secretase. Post-translationally, autophosphorylated on tyrosine residues in response to ligand binding. Autophosphorylation occurs in trans, i.e. one subunit of the dimeric receptor phosphorylates tyrosine residues on the other subunit. Ligands trigger phosphorylation at specific tyrosine residues, thereby creating binding sites for scaffold proteins and effectors. Constitutively phosphorylated at a basal level when overexpressed in heterologous systems; ligand binding leads to increased phosphorylation. Phosphorylation at Tyr-1035 is important for interaction with STAT1. Phosphorylation at Tyr-1056 is important for interaction with PIK3R1. Phosphorylation at Tyr-1242 is important for interaction with SHC1. Phosphorylation at Tyr-1188 may also contribute to the interaction with SHC1. Isoform JM-A CYT-2 is constitutively phosphorylated on tyrosine residues in a ligand-independent manner. E4ICD2 but not E4ICD1 is phosphorylated on tyrosine residues. In terms of processing, ubiquitinated. During mitosis, the ERBB4 intracellular domain is ubiquitinated by the APC/C complex and targeted to proteasomal degradation. Isoform JM-A CYT-1 and isoform JM-B CYT-1 are ubiquitinated by WWP1. The ERBB4 intracellular domain (E4ICD1) is ubiquitinated, and this involves NEDD4. In terms of tissue distribution, isoform JM-A CYT-2 and isoform JM-B CYT-2 are expressed in cerebellum, cerebral cortex, spinal cord, medulla oblongata and eye, but the kidney expresses solely isoform JM-A CYT-2 and the heart solely isoform JM-B CYT-2.

The protein resides in the cell membrane. The protein localises to the nucleus. It localises to the mitochondrion. It catalyses the reaction L-tyrosyl-[protein] + ATP = O-phospho-L-tyrosyl-[protein] + ADP + H(+). Its activity is regulated as follows. Binding of a cognate ligand leads to dimerization and activation by autophosphorylation on tyrosine residues. In vitro kinase activity is increased by Mg(2+). In terms of biological role, tyrosine-protein kinase that plays an essential role as cell surface receptor for neuregulins and EGF family members and regulates development of the heart, the central nervous system and the mammary gland, gene transcription, cell proliferation, differentiation, migration and apoptosis. Required for normal cardiac muscle differentiation during embryonic development, and for postnatal cardiomyocyte proliferation. Required for normal development of the embryonic central nervous system, especially for normal neural crest cell migration and normal axon guidance. Required for mammary gland differentiation, induction of milk proteins and lactation. Acts as cell-surface receptor for the neuregulins NRG1, NRG2, NRG3 and NRG4 and the EGF family members BTC, EREG and HBEGF. Ligand binding triggers receptor dimerization and autophosphorylation at specific tyrosine residues that then serve as binding sites for scaffold proteins and effectors. Ligand specificity and signaling is modulated by alternative splicing, proteolytic processing, and by the formation of heterodimers with other ERBB family members, thereby creating multiple combinations of intracellular phosphotyrosines that trigger ligand- and context-specific cellular responses. Mediates phosphorylation of SHC1 and activation of the MAP kinases MAPK1/ERK2 and MAPK3/ERK1. Isoform JM-A CYT-1 and isoform JM-B CYT-1 phosphorylate PIK3R1, leading to the activation of phosphatidylinositol 3-kinase and AKT1 and protect cells against apoptosis. Isoform JM-A CYT-1 and isoform JM-B CYT-1 mediate reorganization of the actin cytoskeleton and promote cell migration in response to NRG1. Isoform JM-A CYT-2 and isoform JM-B CYT-2 lack the phosphotyrosine that mediates interaction with PIK3R1, and hence do not phosphorylate PIK3R1, do not protect cells against apoptosis, and do not promote reorganization of the actin cytoskeleton and cell migration. Proteolytic processing of isoform JM-A CYT-1 and isoform JM-A CYT-2 gives rise to the corresponding soluble intracellular domains (4ICD) that translocate to the nucleus, promote nuclear import of STAT5A, activation of STAT5A, mammary epithelium differentiation, cell proliferation and activation of gene expression. The ERBB4 soluble intracellular domains (4ICD) colocalize with STAT5A at the CSN2 promoter to regulate transcription of milk proteins during lactation. The ERBB4 soluble intracellular domains can also translocate to mitochondria and promote apoptosis. The protein is Receptor tyrosine-protein kinase erbB-4 (Erbb4) of Mus musculus (Mouse).